The sequence spans 649 residues: Transcription factor E2-alpha (649 aa).

Disordered regions lie at residues 37-107 (RPAS…SERN), 132-207 (GLSS…AKTP), 296-325 (TYSGTSGHTPPVSGADSLLGTRGTTASSSG), and 339-376 (DHSSNNFSPSPSTPVGSPQGLPGTSQWPRAGAPSALSP). Residues 57-71 (SESWGNSEQNSSSFD) show a composition bias toward polar residues. The segment covering 132 to 148 (GLSSPGPLSPSGVKSSS) has biased composition (low complexity). A phosphoserine mark is found at S135 and S140. Positions 171-177 (PKKVRKV) match the Nuclear localization signal motif. The span at 339-352 (DHSSNNFSPSPSTP) shows a compositional bias: low complexity. Position 351 is a phosphothreonine (T351). Residue S355 is modified to Phosphoserine. Position 367 is an omega-N-methylarginine (R367). S375 bears the Phosphoserine mark. Positions 385 to 420 (LSKMEDRLDEAIHVLRSHAVGTASELHGLLPGHSTL) are leucine-zipper. The tract at residues 435–547 (AGLVSGSHPE…KAEREKERRV (113 aa)) is disordered. Over residues 459–477 (SLPSQPSSLPDLSQRPPDS) the composition is skewed to low complexity. A Glycyl lysine isopeptide (Lys-Gly) (interchain with G-Cter in SUMO2) cross-link involves residue K494. S524 carries the phosphoserine modification. Position 526 is a phosphothreonine (D526). A compositionally biased stretch (basic and acidic residues) spans 537–547 (QKAEREKERRV). The bHLH domain maps to 544-597 (ERRVANNARERLRVRDINEAFKELGRMCQLHLSTEKPQTKLLILHQAVAVILSL). A Glycyl lysine isopeptide (Lys-Gly) (interchain with G-Cter in SUMO2) cross-link involves residue K620.

In terms of assembly, homodimer. Heterodimer; efficient DNA binding requires dimerization with another bHLH protein. Forms a heterodimer with TWIST1 and TWIST2. Forms a heterodimer with NEUROD1; the heterodimer is inhibited in presence of ID2, but not NR0B2, to E-box element. Forms a heterodimer with TCF15; the heterodimer binds E-box element. Forms a heterodimer with MYOG; heterodimerization enhances MYOG DNA-binding and transcriptional activities. Forms a heterodimer with ATOH8; repress transcription of TCF3 and TCF3-NEUROG3 dimer-induced transactivation of E box-dependent promoters. Component of a nuclear TAL-1 complex composed at least of CBFA2T3, LDB1, TAL1 and TCF3. Interacts with NEUROD2. Interacts with EP300. Interacts with PTF1A, TGFB1I1. Interacts with UBE2I. Interacts with BHLHA9. Interacts with ASB2; the interaction is mediated by SKP2 and targets TCF3 for Notch-induced proteasomal degradation. Interacts with transcription factor ASCL5/AmeloD. Interacts with RALGAPA1. Interacts with FIGLA. As to quaternary structure, forms a heterodimer with ATOH7; required for ATOH7 DNA-binding. Phosphorylated following NGF stimulation. Post-translationally, undergoes Notch-induced ubiquitination and subsequent proteasomal degradation which is mediated by ASB1 or ASB2, the substrate-recognition components of probable ECS E3 ubiquitin-protein ligase complexes.

The protein resides in the nucleus. Functionally, transcriptional regulator involved in the initiation of neuronal differentiation and mesenchymal to epithelial transition. Heterodimers between TCF3 and tissue-specific basic helix-loop-helix (bHLH) proteins play major roles in determining tissue-specific cell fate during embryogenesis, like muscle or early B-cell differentiation. Together with TCF15, required for the mesenchymal to epithelial transition. Dimers bind DNA on E-box motifs: 5'-CANNTG-3'. Binds to the kappa-E2 site in the kappa immunoglobulin gene enhancer. Binds to the consensus sequence CAC/GCTGT/C present, in the chymotrypsin, insulin, AP-4, and several other gene enhancer motifs. Its function is as follows. Facilitates ATOH7 binding to DNA at the consensus sequence 5'-CAGGTG-3', and positively regulates transcriptional activity. The sequence is that of Transcription factor E2-alpha (Tcf3) from Rattus norvegicus (Rat).